Here is a 331-residue protein sequence, read N- to C-terminus: MLNKVIKTTRLTAEDINGAWTIMPTPSTPDASDWRSTNTVDLDETARIVEELIAAGVNGILSMGTFGECATLTWEEKRDYVSTVVETIRGRVPYFCGTTALNTREVIRQTRELIDIGANGTMLGVPMWVKMDLPTAVQFYRDVAGAVPEAAIAIYANPEAFKFDFPRPFWAEMSKIPQVVTAKYLGIGMLDLDLKLAPNIRFLPHEDDYYAAARINPERITAFWSSGAMCGPATAIMLRDEVERAKSTGDWIKAKAISDDMRAADSTLFPRGDFSEFSKYNIGLEKARMDAAGWLKAGPCRPPYNLVPEDYLVGAQKSGKAWAALHAKYSK.

This sequence belongs to the DapA family.

The enzyme catalyses (3E)-4-(2-hydroxyphenyl)-2-oxobut-3-enoate + H2O = salicylaldehyde + pyruvate. It functions in the pathway aromatic compound metabolism; naphthalene degradation. Functionally, involved in the naphthalene upper catabolic pathway. Catalyzes the transformation of trans-O-hydroxybenzylidenepyruvate (THBPA) to salicylaldehyde and pyruvate. The reaction is reversible. Can also use substrate which carry trans-alpha,beta-unsaturated keto acid side chain and adjacent hydroxyl group such as trans-4-(3-hydroxy-2-thianaphthenyl)-2-oxo-but-3-enoate, trans-4-(3-hydroxy-2-benzofuranyl)-2-oxobut-3-enoate, and trans-4-(3-hydroxy-2-thienyl)-2-oxobut-3-enoate. In Pseudomonas putida (Arthrobacter siderocapsulatus), this protein is Trans-O-hydroxybenzylidenepyruvate hydratase-aldolase (nahE).